A 354-amino-acid polypeptide reads, in one-letter code: 3-dehydroquinate synthase (354 aa).

Residues 100 to 104 (GATGD), 124 to 125 (TT), Lys-136, Lys-145, and 163 to 166 (FLAT) contribute to the NAD(+) site. Zn(2+)-binding residues include Glu-178, His-242, and His-256.

This sequence belongs to the sugar phosphate cyclases superfamily. Dehydroquinate synthase family. Co(2+) serves as cofactor. It depends on Zn(2+) as a cofactor. Requires NAD(+) as cofactor.

The protein localises to the cytoplasm. It catalyses the reaction 7-phospho-2-dehydro-3-deoxy-D-arabino-heptonate = 3-dehydroquinate + phosphate. It functions in the pathway metabolic intermediate biosynthesis; chorismate biosynthesis; chorismate from D-erythrose 4-phosphate and phosphoenolpyruvate: step 2/7. In terms of biological role, catalyzes the conversion of 3-deoxy-D-arabino-heptulosonate 7-phosphate (DAHP) to dehydroquinate (DHQ). This chain is 3-dehydroquinate synthase, found in Staphylococcus haemolyticus (strain JCSC1435).